A 186-amino-acid chain; its full sequence is uncharacterized protein (186 aa).

The N-terminal stretch at 1–28 (MSVKPAALFRISAALAVAGLGASLIASA) is a signal peptide.

This is an uncharacterized protein from Rhizobium meliloti (strain 1021) (Ensifer meliloti).